We begin with the raw amino-acid sequence, 1465 residues long: DNA polymerase III PolC-type (1465 aa).

The 157-residue stretch at 427-583 (YVVFDVETTG…YDAEATGRLL (157 aa)) folds into the Exonuclease domain.

Belongs to the DNA polymerase type-C family. PolC subfamily.

It localises to the cytoplasm. The catalysed reaction is DNA(n) + a 2'-deoxyribonucleoside 5'-triphosphate = DNA(n+1) + diphosphate. Required for replicative DNA synthesis. This DNA polymerase also exhibits 3' to 5' exonuclease activity. This Streptococcus pyogenes serotype M1 protein is DNA polymerase III PolC-type.